We begin with the raw amino-acid sequence, 492 residues long: GTPase Obg (492 aa).

In terms of domain architecture, Obg spans 2–159; the sequence is PRFVDRVVIH…RELTLELKTV (158 aa). The 181-residue stretch at 160-340 folds into the OBG-type G domain; that stretch reads ADVGLIGFPS…LIFGLWQMIS (181 aa). GTP contacts are provided by residues 166-173, 191-195, 212-215, 292-295, and 321-323; these read GFPSAGKS, FTTLV, DVPG, NKID, and STV. Mg(2+) contacts are provided by Ser173 and Thr193. The 81-residue stretch at 358–438 folds into the OCT domain; the sequence is PVPVDDSGFR…IGDMTFDWEP (81 aa). A disordered region spans residues 449-492; that stretch reads SGRGTDARLERTERVGAAERKAARRQRRTGDDAERGTTERGENT. Basic and acidic residues-rich tracts occupy residues 453 to 469 and 476 to 492; these read TDAR…AERK and RTGD…GENT.

It belongs to the TRAFAC class OBG-HflX-like GTPase superfamily. OBG GTPase family. In terms of assembly, monomer. Requires Mg(2+) as cofactor.

The protein resides in the cytoplasm. An essential GTPase which binds GTP, GDP and possibly (p)ppGpp with moderate affinity, with high nucleotide exchange rates and a fairly low GTP hydrolysis rate. Plays a role in control of the cell cycle, stress response, ribosome biogenesis and in those bacteria that undergo differentiation, in morphogenesis control. The polypeptide is GTPase Obg (Mycobacterium avium (strain 104)).